Here is a 500-residue protein sequence, read N- to C-terminus: Cytochrome P450 2D3 (500 aa).

Cys-446 lines the heme pocket.

Belongs to the cytochrome P450 family. The cofactor is heme.

It localises to the endoplasmic reticulum membrane. The protein localises to the microsome membrane. The catalysed reaction is an organic molecule + reduced [NADPH--hemoprotein reductase] + O2 = an alcohol + oxidized [NADPH--hemoprotein reductase] + H2O + H(+). Functionally, cytochromes P450 are a group of heme-thiolate monooxygenases. In liver microsomes, this enzyme is involved in an NADPH-dependent electron transport pathway. It oxidizes a variety of structurally unrelated compounds, including steroids, fatty acids, and xenobiotics. This chain is Cytochrome P450 2D3 (Cyp2d3), found in Rattus norvegicus (Rat).